We begin with the raw amino-acid sequence, 664 residues long: DNA ligase (664 aa).

NAD(+) is bound by residues Asp32 to Asp36 and Ser80 to Leu81. The active-site N6-AMP-lysine intermediate is the Lys122. Positions 144, 178, and 314 each coordinate NAD(+). Positions 407, 410, 423, and 429 each coordinate Zn(2+). A BRCT domain is found at Ile587–Lys664.

Belongs to the NAD-dependent DNA ligase family. LigA subfamily. Mg(2+) is required as a cofactor. Requires Mn(2+) as cofactor.

It catalyses the reaction NAD(+) + (deoxyribonucleotide)n-3'-hydroxyl + 5'-phospho-(deoxyribonucleotide)m = (deoxyribonucleotide)n+m + AMP + beta-nicotinamide D-nucleotide.. DNA ligase that catalyzes the formation of phosphodiester linkages between 5'-phosphoryl and 3'-hydroxyl groups in double-stranded DNA using NAD as a coenzyme and as the energy source for the reaction. It is essential for DNA replication and repair of damaged DNA. The polypeptide is DNA ligase (Clostridium botulinum (strain Langeland / NCTC 10281 / Type F)).